Here is a 48-residue protein sequence, read N- to C-terminus: Delta-actitoxin-Bcg1c (48 aa).

Cystine bridges form between Cys-4–Cys-45, Cys-6–Cys-35, and Cys-28–Cys-46.

Its subcellular location is the secreted. The protein resides in the nematocyst. Binds specifically to voltage-gated sodium channels SCN1A/Nav1.1, thereby delaying their inactivation during signal transduction. In Bunodosoma cangicum (Sea anemone), this protein is Delta-actitoxin-Bcg1c.